Here is a 135-residue protein sequence, read N- to C-terminus: ATP synthase epsilon chain (135 aa).

This sequence belongs to the ATPase epsilon chain family. As to quaternary structure, F-type ATPases have 2 components, CF(1) - the catalytic core - and CF(0) - the membrane proton channel. CF(1) has five subunits: alpha(3), beta(3), gamma(1), delta(1), epsilon(1). CF(0) has three main subunits: a, b and c.

The protein resides in the cell inner membrane. Functionally, produces ATP from ADP in the presence of a proton gradient across the membrane. This Chelativorans sp. (strain BNC1) protein is ATP synthase epsilon chain.